The following is a 157-amino-acid chain: Heat shock 22 kDa protein, chloroplastic (157 aa).

The region spanning 40–155 (GKAGHTHAPM…KPEPKRIAVT (116 aa)) is the sHSP domain.

This sequence belongs to the small heat shock protein (HSP20) family.

The protein resides in the plastid. It is found in the chloroplast. The chain is Heat shock 22 kDa protein, chloroplastic from Chlamydomonas reinhardtii (Chlamydomonas smithii).